A 343-amino-acid polypeptide reads, in one-letter code: Arginine N-succinyltransferase (343 aa).

Residue Leu125 participates in succinyl-CoA binding. The active-site Proton donor is the His229.

The protein belongs to the arginine N-succinyltransferase family.

The catalysed reaction is succinyl-CoA + L-arginine = N(2)-succinyl-L-arginine + CoA + H(+). It participates in amino-acid degradation; L-arginine degradation via AST pathway; L-glutamate and succinate from L-arginine: step 1/5. Catalyzes the transfer of succinyl-CoA to arginine to produce N(2)-succinylarginine. In Photorhabdus laumondii subsp. laumondii (strain DSM 15139 / CIP 105565 / TT01) (Photorhabdus luminescens subsp. laumondii), this protein is Arginine N-succinyltransferase.